The chain runs to 435 residues: NADH-quinone oxidoreductase subunit D (435 aa).

It belongs to the complex I 49 kDa subunit family. In terms of assembly, NDH-1 is composed of 14 different subunits. Subunits NuoB, C, D, E, F, and G constitute the peripheral sector of the complex.

It is found in the cell inner membrane. The enzyme catalyses a quinone + NADH + 5 H(+)(in) = a quinol + NAD(+) + 4 H(+)(out). NDH-1 shuttles electrons from NADH, via FMN and iron-sulfur (Fe-S) centers, to quinones in the respiratory chain. The immediate electron acceptor for the enzyme in this species is believed to be ubiquinone. Couples the redox reaction to proton translocation (for every two electrons transferred, four hydrogen ions are translocated across the cytoplasmic membrane), and thus conserves the redox energy in a proton gradient. This is NADH-quinone oxidoreductase subunit D from Xanthomonas euvesicatoria pv. vesicatoria (strain 85-10) (Xanthomonas campestris pv. vesicatoria).